Reading from the N-terminus, the 424-residue chain is Glutamyl-tRNA reductase (424 aa).

Residues Thr49–Arg52, Ser105, Glu110–Gln112, and Gln116 each bind substrate. Cys50 serves as the catalytic Nucleophile. Gly185–Ala190 contributes to the NADP(+) binding site.

Belongs to the glutamyl-tRNA reductase family. In terms of assembly, homodimer.

The catalysed reaction is (S)-4-amino-5-oxopentanoate + tRNA(Glu) + NADP(+) = L-glutamyl-tRNA(Glu) + NADPH + H(+). It participates in porphyrin-containing compound metabolism; protoporphyrin-IX biosynthesis; 5-aminolevulinate from L-glutamyl-tRNA(Glu): step 1/2. Its function is as follows. Catalyzes the NADPH-dependent reduction of glutamyl-tRNA(Glu) to glutamate 1-semialdehyde (GSA). The protein is Glutamyl-tRNA reductase of Legionella pneumophila (strain Paris).